The sequence spans 83 residues: Small ribosomal subunit protein uS17 (83 aa).

Belongs to the universal ribosomal protein uS17 family. In terms of assembly, part of the 30S ribosomal subunit.

Functionally, one of the primary rRNA binding proteins, it binds specifically to the 5'-end of 16S ribosomal RNA. The polypeptide is Small ribosomal subunit protein uS17 (Zymomonas mobilis subsp. mobilis (strain ATCC 31821 / ZM4 / CP4)).